A 94-amino-acid chain; its full sequence is MIDLVKYPVSTEKSYRLIEKNQYTFDVDVRLTKPQIRKVFENLFDIKVLAVNTHLLPTKKKRLGLNLGFKTRYKRAIITIKANQTIPIFENSDS.

It belongs to the universal ribosomal protein uL23 family. Part of the 50S ribosomal subunit.

It is found in the plastid. The protein localises to the chloroplast. Functionally, binds to 23S rRNA. The chain is Large ribosomal subunit protein uL23c (rpl23) from Tupiella akineta (Green alga).